Consider the following 1210-residue polypeptide: ATP-dependent helicase/nuclease subunit A (1210 aa).

The UvrD-like helicase ATP-binding domain maps to 27 to 483 (QKRTAQQIEA…ILLKENFRSQ (457 aa)). Position 48–55 (48–55 (ASAGSGKT)) interacts with ATP. Residues 512-798 (QLIAGSHAQT…NLMTIHKSKG (287 aa)) form the UvrD-like helicase C-terminal domain.

The protein belongs to the helicase family. AddA subfamily. In terms of assembly, heterodimer of AddA and AddB/RexB. Mg(2+) serves as cofactor.

It carries out the reaction Couples ATP hydrolysis with the unwinding of duplex DNA by translocating in the 3'-5' direction.. The enzyme catalyses ATP + H2O = ADP + phosphate + H(+). Functionally, the heterodimer acts as both an ATP-dependent DNA helicase and an ATP-dependent, dual-direction single-stranded exonuclease. Recognizes the chi site generating a DNA molecule suitable for the initiation of homologous recombination. The AddA nuclease domain is required for chi fragment generation; this subunit has the helicase and 3' -&gt; 5' nuclease activities. This is ATP-dependent helicase/nuclease subunit A from Streptococcus pyogenes serotype M5 (strain Manfredo).